We begin with the raw amino-acid sequence, 92 residues long: Small ribosomal subunit protein uS19 (92 aa).

The protein belongs to the universal ribosomal protein uS19 family.

Its function is as follows. Protein S19 forms a complex with S13 that binds strongly to the 16S ribosomal RNA. In Borrelia hermsii (strain HS1 / DAH), this protein is Small ribosomal subunit protein uS19.